Reading from the N-terminus, the 928-residue chain is cGMP-dependent 3',5'-cyclic phosphodiesterase (928 aa).

The residue at position 109 (S109) is a Phosphoserine. Positions 188–210 (RRPEAVQNTSADPSEDQKDEKGY) are disordered. GAF domains are found at residues 228-365 (DATS…GTVL) and 397-536 (DVSV…GISI). 5 residues coordinate 3',5'-cyclic GMP: S419, D434, I453, Y476, and T487. One can recognise a PDEase domain in the interval 566-890 (SDDEYTKLLH…EHWTKVSHKF (325 aa)). Catalysis depends on H644, which acts as the Proton donor. Residues H648, H684, D685, and D796 each coordinate Zn(2+). D685 lines the Mg(2+) pocket.

This sequence belongs to the cyclic nucleotide phosphodiesterase family. PDE2 subfamily. In terms of assembly, homodimer. The cofactor is Zn(2+). Requires Mg(2+) as cofactor. As to expression, expressed in brain and liver.

The protein localises to the cell membrane. The protein resides in the cytoplasm. It is found in the mitochondrion matrix. It localises to the mitochondrion inner membrane. Its subcellular location is the mitochondrion outer membrane. The catalysed reaction is a nucleoside 3',5'-cyclic phosphate + H2O = a nucleoside 5'-phosphate + H(+). It carries out the reaction 3',5'-cyclic GMP + H2O = GMP + H(+). It catalyses the reaction 3',5'-cyclic AMP + H2O = AMP + H(+). With respect to regulation, the 3',5'-cyclic-AMP phosphodiesterase activity is stimulated by 3',5'-cyclic GMP. Specifically inhibited by Bay 60-7550. When repressed, protected from ionomycin- but not staurosporin-induced cell death. In terms of biological role, cGMP-activated cyclic nucleotide phosphodiesterase with a dual-specificity for the second messengers cAMP and cGMP, which are key regulators of many important physiological processes. Has a higher efficiency with cGMP compared to cAMP. Plays a role in cell growth and migration. Regulates mitochondrial cAMP levels and respiration. Involved in the regulation of mitochondria morphology/dynamics and apoptotic cell death via local modulation of cAMP/PKA signaling in the mitochondrion, including the monitoring of local cAMP levels at the outer mitochondrial membrane and of PKA-dependent phosphorylation of Dnm1l. This chain is cGMP-dependent 3',5'-cyclic phosphodiesterase, found in Rattus norvegicus (Rat).